The following is a 632-amino-acid chain: 1-deoxy-D-xylulose-5-phosphate synthase (632 aa).

Thiamine diphosphate contacts are provided by residues His-77 and 118 to 120 (GHS). Residue Asp-149 participates in Mg(2+) binding. Thiamine diphosphate contacts are provided by residues 150-151 (GA), Asn-178, Tyr-289, and Glu-372. Residue Asn-178 participates in Mg(2+) binding.

It belongs to the transketolase family. DXPS subfamily. As to quaternary structure, homodimer. Mg(2+) is required as a cofactor. It depends on thiamine diphosphate as a cofactor.

The enzyme catalyses D-glyceraldehyde 3-phosphate + pyruvate + H(+) = 1-deoxy-D-xylulose 5-phosphate + CO2. It functions in the pathway metabolic intermediate biosynthesis; 1-deoxy-D-xylulose 5-phosphate biosynthesis; 1-deoxy-D-xylulose 5-phosphate from D-glyceraldehyde 3-phosphate and pyruvate: step 1/1. Its function is as follows. Catalyzes the acyloin condensation reaction between C atoms 2 and 3 of pyruvate and glyceraldehyde 3-phosphate to yield 1-deoxy-D-xylulose-5-phosphate (DXP). This chain is 1-deoxy-D-xylulose-5-phosphate synthase, found in Listeria innocua serovar 6a (strain ATCC BAA-680 / CLIP 11262).